The primary structure comprises 304 residues: 6-dehydroglucose reductase (304 aa).

Residues Trp-28, Arg-29, and Asp-56 each coordinate NADP(+). Catalysis depends on Tyr-61, which acts as the Proton donor. D-glucose is bound by residues Tyr-61, His-133, and Arg-134. NADP(+) contacts are provided by Ser-163, Asn-164, Gln-185, Ser-215, Leu-217, Gly-219, Gly-268, Ser-269, Gln-270, and Arg-274.

Belongs to the aldo/keto reductase family.

It catalyses the reaction D-glucose + NADP(+) = 6-dehydro-D-glucose + NADPH + H(+). Part of the alkanesulfonate monooxygenase (sulfo-ASMO) pathway, a D-sulfoquinovose degradation pathway that enables the complete utilization of all carbons within sulfoquinovose (SQ) with concomitant production of inorganic sulfite. Catalyzes the NADP-dependent reduction of 6-dehydro-D-glucose to D-glucose. Can also catalyze the reversible reaction, the formation of 6-dehydro-D-glucose from D-glucose in the presence of NADP(+). This chain is 6-dehydroglucose reductase, found in Novosphingobium aromaticivorans (strain ATCC 700278 / DSM 12444 / CCUG 56034 / CIP 105152 / NBRC 16084 / F199).